Consider the following 438-residue polypeptide: 26S proteasome regulatory subunit 6A (438 aa).

Positions 1–24 are disordered; that stretch reads MSTLEELDALDQSQQGGSSNNEGL. The segment covering 11–22 has biased composition (polar residues); it reads DQSQQGGSSNNE. 226–233 is an ATP binding site; that stretch reads GPPGTGKT.

The protein belongs to the AAA ATPase family.

It is found in the cytoplasm. Its subcellular location is the nucleus. The 26S proteasome is involved in the ATP-dependent degradation of ubiquitinated proteins. The regulatory (or ATPase) complex confers ATP dependency and substrate specificity to the 26S complex. The sequence is that of 26S proteasome regulatory subunit 6A (tbp1) from Schizosaccharomyces pombe (strain 972 / ATCC 24843) (Fission yeast).